Reading from the N-terminus, the 115-residue chain is DNA-binding protein TV0008 (115 aa).

The disordered stretch occupies residues 18-37 (LQRQAMQRQMAEEEEKQREI).

It belongs to the PDCD5 family.

This chain is DNA-binding protein TV0008, found in Thermoplasma volcanium (strain ATCC 51530 / DSM 4299 / JCM 9571 / NBRC 15438 / GSS1).